The primary structure comprises 332 residues: Solute carrier family 25 member 16 (332 aa).

Solcar repeat units lie at residues 34 to 120 (FYWL…YKTL), 128 to 216 (SGHV…LKSV), and 238 to 328 (LKTH…MKQF). 6 helical membrane-spanning segments follow: residues 37–57 (LRSF…VAPL), 88–108 (GFLG…PYGA), 134–154 (LMAG…LDMV), 191–211 (GLMP…FTFG), 244–264 (LLCG…FDVT), and 299–319 (GLYR…AVAF).

This sequence belongs to the mitochondrial carrier (TC 2.A.29) family.

It localises to the mitochondrion inner membrane. Its function is as follows. May be involved in the transport of coenzyme A in the mitochondrial matrix. Very little is known about the physiological function of this carrier. This Homo sapiens (Human) protein is Solute carrier family 25 member 16.